The sequence spans 419 residues: Fumarylacetoacetase (419 aa).

The residue at position 2 (serine 2) is an N-acetylserine. Serine 92 is modified (phosphoserine). Aspartate 126 provides a ligand contact to Ca(2+). Position 128 (tyrosine 128) interacts with substrate. Histidine 133 functions as the Proton acceptor in the catalytic mechanism. Arginine 142 serves as a coordination point for substrate. Ca(2+) is bound by residues glutamate 199, glutamate 201, and aspartate 233. Mg(2+) is bound at residue aspartate 233. Residues glutamine 240 and tyrosine 244 each coordinate substrate. Positions 253 and 257 each coordinate Mg(2+). Position 309 is a phosphoserine (serine 309). Position 350 (threonine 350) interacts with substrate. Phosphoserine is present on serine 417.

The protein belongs to the FAH family. In terms of assembly, homodimer. The cofactor is Ca(2+). It depends on Mg(2+) as a cofactor.

It carries out the reaction 4-fumarylacetoacetate + H2O = acetoacetate + fumarate + H(+). It participates in amino-acid degradation; L-phenylalanine degradation; acetoacetate and fumarate from L-phenylalanine: step 6/6. This Bos taurus (Bovine) protein is Fumarylacetoacetase (FAH).